We begin with the raw amino-acid sequence, 718 residues long: Ubiquitin homeostasis protein lub1 (718 aa).

7 WD repeats span residues 12 to 50 (GHKQ…WTPH), 54 to 98 (NHEG…PSYY), 101 to 139 (GHES…YVLK), 140 to 178 (GHQS…KSIL), 180 to 217 (HNDC…YELH), 218 to 257 (GHTS…QCIT), and 259 to 296 (PTTS…VAPT). The PFU domain maps to 353-448 (QWSQKENEWK…QGHSLESKKE (96 aa)). Residues 462–717 (TIFPVSQLLF…VDAEKQILSL (256 aa)) form the PUL domain.

As to quaternary structure, interacts with cdc48.

The protein localises to the nucleus. Its subcellular location is the cytoplasm. Its function is as follows. Acts as a negative regulator of vacuole-dependent ubiquitin degradation. In Schizosaccharomyces pombe (strain 972 / ATCC 24843) (Fission yeast), this protein is Ubiquitin homeostasis protein lub1 (lub1).